A 343-amino-acid polypeptide reads, in one-letter code: Heat-inducible transcription repressor HrcA (343 aa).

Belongs to the HrcA family.

In terms of biological role, negative regulator of class I heat shock genes (grpE-dnaK-dnaJ and groELS operons). Prevents heat-shock induction of these operons. This Mycobacterium ulcerans (strain Agy99) protein is Heat-inducible transcription repressor HrcA.